The following is a 290-amino-acid chain: NAD kinase (290 aa).

Asp-72 serves as the catalytic Proton acceptor. Residues Asp-72 to Gly-73, Asn-146 to Glu-147, Arg-174, Asp-176, and Thr-187 to Ser-192 each bind NAD(+).

Belongs to the NAD kinase family. A divalent metal cation serves as cofactor.

The protein localises to the cytoplasm. The enzyme catalyses NAD(+) + ATP = ADP + NADP(+) + H(+). Involved in the regulation of the intracellular balance of NAD and NADP, and is a key enzyme in the biosynthesis of NADP. Catalyzes specifically the phosphorylation on 2'-hydroxyl of the adenosine moiety of NAD to yield NADP. This Methylococcus capsulatus (strain ATCC 33009 / NCIMB 11132 / Bath) protein is NAD kinase.